A 339-amino-acid polypeptide reads, in one-letter code: Dihydroorotase (339 aa).

Positions 12 and 14 each coordinate Zn(2+). Residues 14–16 and Asn-40 contribute to the substrate site; that span reads HVR. Zn(2+)-binding residues include Lys-94, His-133, His-167, and Asp-239. Lys-94 bears the N6-carboxylysine mark. Residue His-133 participates in substrate binding. Asp-239 is an active-site residue. His-243 and Ala-255 together coordinate substrate.

Belongs to the metallo-dependent hydrolases superfamily. DHOase family. Class II DHOase subfamily. Homodimer. Requires Zn(2+) as cofactor.

The enzyme catalyses (S)-dihydroorotate + H2O = N-carbamoyl-L-aspartate + H(+). The protein operates within pyrimidine metabolism; UMP biosynthesis via de novo pathway; (S)-dihydroorotate from bicarbonate: step 3/3. In terms of biological role, catalyzes the reversible cyclization of carbamoyl aspartate to dihydroorotate. This Helicobacter acinonychis (strain Sheeba) protein is Dihydroorotase.